Reading from the N-terminus, the 556-residue chain is MNRRLDNARTIRAPHGSDLSARSWLTEAPLRMLMNNLDPDVAERPEELVVYGGIGRAARDWESFDRILGALRDLGPEETLLVQSGKPVGVFRTHADAPRVLIANSNLVPNWANWQHFHELDRKGLMMYGQMTAGSWIYIGSQGIVQGTYETFVEAGRQHYGGDLAGRWILTGGLGGMGGAQPLAATMAGASMIAVECTPSRIEMRLRTRYLDRRADTLDEALAMLEAAKRDGKPVSIGLLGNAAEVFPELVRRGIRPDIVTDQTSAHDPVNGYLPAGWTLEHWAAMRERDPEAVALAAKRSMAGQVRAMLDFWRMGIPVLDYGNNIRAMAQEMGVADAFDFPGFVPAYIRPLFCRGIGPFRWAALSGDPEDIYRTDAKVKELIPDDPHLHHWLDMAREWIAFQGLPARICWVGLGQRHRLGLAFNEMVARGELSAPVVIGRDHLDSGSVASPNRETEAMRDGSDAVSDWPLLNALLNCASGATWVSLHHGGGVGMGYSQHAGMVIVADGTEAAAKRLERVLWNDPATGVMRHADAGYDIAIDCARENGLNLPGITG.

NAD(+) contacts are provided by residues 52-53 (GG), Gln130, 176-178 (GMG), Glu196, Arg201, 242-243 (NA), 263-267 (QTSAH), 273-274 (YL), and Tyr322. Cys410 is a catalytic residue. Gly492 contributes to the NAD(+) binding site.

This sequence belongs to the urocanase family. NAD(+) is required as a cofactor.

Its subcellular location is the cytoplasm. The enzyme catalyses 4-imidazolone-5-propanoate = trans-urocanate + H2O. It functions in the pathway amino-acid degradation; L-histidine degradation into L-glutamate; N-formimidoyl-L-glutamate from L-histidine: step 2/3. Functionally, catalyzes the conversion of urocanate to 4-imidazolone-5-propionate. The sequence is that of Urocanate hydratase from Acidiphilium cryptum (strain JF-5).